The primary structure comprises 512 residues: Ribose import ATP-binding protein RbsA 2 (512 aa).

ABC transporter domains are found at residues 7–242 and 257–498; these read LEIR…VGRE and LGEP…SGIG. 39 to 46 is a binding site for ATP; it reads GENGAGKS.

Belongs to the ABC transporter superfamily. Ribose importer (TC 3.A.1.2.1) family. As to quaternary structure, the complex is composed of an ATP-binding protein (RbsA), two transmembrane proteins (RbsC) and a solute-binding protein (RbsB).

Its subcellular location is the cell inner membrane. It catalyses the reaction D-ribose(out) + ATP + H2O = D-ribose(in) + ADP + phosphate + H(+). Part of the ABC transporter complex RbsABC involved in ribose import. Responsible for energy coupling to the transport system. The chain is Ribose import ATP-binding protein RbsA 2 from Rhizobium meliloti (strain 1021) (Ensifer meliloti).